Consider the following 1009-residue polypeptide: Epididymis-specific alpha-mannosidase (1009 aa).

An N-terminal signal peptide occupies residues 1 to 23; it reads MGQLCWLPLLAPLLLLRPPGVQS. Residues H36, D38, and D151 each contribute to the Zn(2+) site. D151 (nucleophile) is an active-site residue. Residues N226, N249, N294, and N336 are each glycosylated (N-linked (GlcNAc...) asparagine). H420 is a binding site for Zn(2+). Residues N516, N608, N670, N675, N748, N808, N812, and N890 are each glycosylated (N-linked (GlcNAc...) asparagine). The segment at 972-991 is disordered; it reads GPGRHRGDTTSPSRPPGGPI.

Belongs to the glycosyl hydrolase 38 family. Zn(2+) serves as cofactor.

It localises to the secreted. The catalysed reaction is Hydrolysis of terminal, non-reducing alpha-D-mannose residues in alpha-D-mannosides.. In Homo sapiens (Human), this protein is Epididymis-specific alpha-mannosidase (MAN2B2).